Here is a 308-residue protein sequence, read N- to C-terminus: Adult enhancer factor 1 (308 aa).

Disordered regions lie at residues 50 to 94 and 123 to 143; these read AHMA…PLPF and QAAAAEQQQPPPPTSHLTHLT. Residues 56–76 are compositionally biased toward low complexity; the sequence is QQQQQQQQQQQQQHHQQQQQQ. The span at 81–90 shows a compositional bias: pro residues; the sequence is PSVPPPPTEL. 4 consecutive C2H2-type zinc fingers follow at residues 184 to 206, 212 to 234, 240 to 262, and 268 to 290; these read FHCTVCDRRFRQLSTLTNHVKIH, YKCNVCDKTFRQSSTLTNHLKIH, YNCNFCPKHFRQLSTLANHVKIH, and FECVICKKQFRQSSTLNNHIKIH.

In terms of tissue distribution, found in all tissues examined including the ovary and the fat body.

The protein localises to the nucleus. In terms of biological role, transcriptional repressor that binds specifically to fat body-specific enhancers, namely the adult ADH enhancer (AAE) and the enhancer that controls yolk protein gene expression. This Drosophila melanogaster (Fruit fly) protein is Adult enhancer factor 1 (Aef1).